A 239-amino-acid chain; its full sequence is Purine nucleoside phosphorylase DeoD-type (239 aa).

An a purine D-ribonucleoside-binding site is contributed by H5. Phosphate is bound by residues G21, R25, R44, and 89 to 92 (RVGS). A purine D-ribonucleoside contacts are provided by residues 180-182 (EME) and 204-205 (SD). D205 functions as the Proton donor in the catalytic mechanism.

Belongs to the PNP/UDP phosphorylase family. Homohexamer; trimer of homodimers.

It carries out the reaction a purine D-ribonucleoside + phosphate = a purine nucleobase + alpha-D-ribose 1-phosphate. The enzyme catalyses a purine 2'-deoxy-D-ribonucleoside + phosphate = a purine nucleobase + 2-deoxy-alpha-D-ribose 1-phosphate. Catalyzes the reversible phosphorolytic breakdown of the N-glycosidic bond in the beta-(deoxy)ribonucleoside molecules, with the formation of the corresponding free purine bases and pentose-1-phosphate. The polypeptide is Purine nucleoside phosphorylase DeoD-type (Klebsiella pneumoniae).